A 352-amino-acid polypeptide reads, in one-letter code: Methylthioribose-1-phosphate isomerase (352 aa).

Substrate-binding positions include 49 to 51 (RGA), Arg-93, and Gln-202. Asp-243 acts as the Proton donor in catalysis. Position 253–254 (253–254 (NK)) interacts with substrate.

The protein belongs to the eIF-2B alpha/beta/delta subunits family. MtnA subfamily.

The enzyme catalyses 5-(methylsulfanyl)-alpha-D-ribose 1-phosphate = 5-(methylsulfanyl)-D-ribulose 1-phosphate. Its pathway is amino-acid biosynthesis; L-methionine biosynthesis via salvage pathway; L-methionine from S-methyl-5-thio-alpha-D-ribose 1-phosphate: step 1/6. Its function is as follows. Catalyzes the interconversion of methylthioribose-1-phosphate (MTR-1-P) into methylthioribulose-1-phosphate (MTRu-1-P). The protein is Methylthioribose-1-phosphate isomerase of Magnetococcus marinus (strain ATCC BAA-1437 / JCM 17883 / MC-1).